Here is a 480-residue protein sequence, read N- to C-terminus: Protein nucleotidyltransferase YdiU (480 aa).

8 residues coordinate ATP: Gly86, Gly88, Arg89, Lys109, Asp121, Gly122, Arg172, and Arg179. Catalysis depends on Asp248, which acts as the Proton acceptor. 2 residues coordinate Mg(2+): Asn249 and Asp258. Asp258 lines the ATP pocket.

The protein belongs to the SELO family. The cofactor is Mg(2+). Mn(2+) is required as a cofactor.

It catalyses the reaction L-seryl-[protein] + ATP = 3-O-(5'-adenylyl)-L-seryl-[protein] + diphosphate. It carries out the reaction L-threonyl-[protein] + ATP = 3-O-(5'-adenylyl)-L-threonyl-[protein] + diphosphate. The enzyme catalyses L-tyrosyl-[protein] + ATP = O-(5'-adenylyl)-L-tyrosyl-[protein] + diphosphate. The catalysed reaction is L-histidyl-[protein] + UTP = N(tele)-(5'-uridylyl)-L-histidyl-[protein] + diphosphate. It catalyses the reaction L-seryl-[protein] + UTP = O-(5'-uridylyl)-L-seryl-[protein] + diphosphate. It carries out the reaction L-tyrosyl-[protein] + UTP = O-(5'-uridylyl)-L-tyrosyl-[protein] + diphosphate. In terms of biological role, nucleotidyltransferase involved in the post-translational modification of proteins. It can catalyze the addition of adenosine monophosphate (AMP) or uridine monophosphate (UMP) to a protein, resulting in modifications known as AMPylation and UMPylation. This Salmonella choleraesuis (strain SC-B67) protein is Protein nucleotidyltransferase YdiU.